A 483-amino-acid polypeptide reads, in one-letter code: Serine hydroxymethyltransferase, cytosolic (483 aa).

Lysine 257 is modified (N6-(pyridoxal phosphate)lysine).

It belongs to the SHMT family. Homotetramer. Identified in complex with ABRAXAS2 and the other subunits of the BRISC complex, at least composed of ABRAXAS2, BRCC3/BRCC36, BABAM2 and BABAM1/NBA1. It depends on pyridoxal 5'-phosphate as a cofactor.

It localises to the cytoplasm. It catalyses the reaction (6R)-5,10-methylene-5,6,7,8-tetrahydrofolate + glycine + H2O = (6S)-5,6,7,8-tetrahydrofolate + L-serine. The protein operates within one-carbon metabolism; tetrahydrofolate interconversion. Interconversion of serine and glycine. The sequence is that of Serine hydroxymethyltransferase, cytosolic (SHMT1) from Pongo abelii (Sumatran orangutan).